The primary structure comprises 430 residues: 5-methylthioadenosine/S-adenosylhomocysteine deaminase (430 aa).

Residues histidine 59 and histidine 61 each coordinate Zn(2+). Glutamate 88 and histidine 181 together coordinate substrate. A Zn(2+)-binding site is contributed by histidine 208. Residues glutamate 211 and aspartate 296 each coordinate substrate. Aspartate 296 contacts Zn(2+).

The protein belongs to the metallo-dependent hydrolases superfamily. MTA/SAH deaminase family. Zn(2+) is required as a cofactor.

The catalysed reaction is S-adenosyl-L-homocysteine + H2O + H(+) = S-inosyl-L-homocysteine + NH4(+). It carries out the reaction S-methyl-5'-thioadenosine + H2O + H(+) = S-methyl-5'-thioinosine + NH4(+). Functionally, catalyzes the deamination of 5-methylthioadenosine and S-adenosyl-L-homocysteine into 5-methylthioinosine and S-inosyl-L-homocysteine, respectively. Is also able to deaminate adenosine. This is 5-methylthioadenosine/S-adenosylhomocysteine deaminase from Aquifex aeolicus (strain VF5).